A 403-amino-acid polypeptide reads, in one-letter code: Dynactin subunit 2-A (403 aa).

The tract at residues 1-26 is disordered; it reads MADPKYADLPGIARNEPDVYETSDLP. Positions 99–132 form a coiled coil; sequence PQQKYQRLLHEVQELTQEVEKTQSTVKESAAEEK. The tract at residues 183–203 is disordered; sequence AAKTRKNPEGKSPAKGPGPDT. Residues 381–401 adopt a coiled-coil conformation; the sequence is KENLATVEDNFSNIDGRIKKL.

This sequence belongs to the dynactin subunit 2 family. In terms of assembly, subunit of dynactin, a multiprotein complex part of a tripartite complex with dynein and a adapter, such as BICDL1, BICD2 or HOOK3. The dynactin complex is built around ACTR1A/ACTB filament and consists of an actin-related filament composed of a shoulder domain, a pointed end and a barbed end. Its length is defined by its flexible shoulder domain. The soulder is composed of 2 DCTN1 subunits, 4 DCTN2 and 2 DCTN3.

Its subcellular location is the cytoplasm. It is found in the cytoskeleton. The protein resides in the microtubule organizing center. It localises to the centrosome. The protein localises to the membrane. Its function is as follows. Part of the dynactin complex that activates the molecular motor dynein for ultra-processive transport along microtubules. In the dynactin soulder domain, binds the ACTR1A filament and acts as a molecular ruler to determine the length. Modulates cytoplasmic dynein binding to an organelle, and plays a role in prometaphase chromosome alignment and spindle organization during mitosis. Involved in anchoring microtubules to centrosomes. This chain is Dynactin subunit 2-A (dctn2-a), found in Xenopus laevis (African clawed frog).